The sequence spans 78 residues: Acyl carrier protein (78 aa).

One can recognise a Carrier domain in the interval 2 to 77 (SDILERVRKI…DAVKFITEKT (76 aa)). Ser37 is modified (O-(pantetheine 4'-phosphoryl)serine).

Belongs to the acyl carrier protein (ACP) family. In terms of processing, 4'-phosphopantetheine is transferred from CoA to a specific serine of apo-ACP by AcpS. This modification is essential for activity because fatty acids are bound in thioester linkage to the sulfhydryl of the prosthetic group.

It localises to the cytoplasm. It functions in the pathway lipid metabolism; fatty acid biosynthesis. Its function is as follows. Carrier of the growing fatty acid chain in fatty acid biosynthesis. This chain is Acyl carrier protein, found in Caulobacter vibrioides (strain ATCC 19089 / CIP 103742 / CB 15) (Caulobacter crescentus).